The sequence spans 494 residues: Cytochrome P450 monooxygenase acrF (494 aa).

A heme-binding site is contributed by Cys420.

This sequence belongs to the cytochrome P450 family. Requires heme as cofactor.

The protein operates within secondary metabolite biosynthesis. In terms of biological role, cytochrome P450 monooxygenase; part of the cluster that mediates the biosynthesis of acurin A, a highly reduced polyketide coupled to a serine via a peptide bond. The activities of the highly reducing polyketide synthase acrA and the nonribosomal peptide synthetase acrB are collectively responsible for the synthesis of the acurin A core structure with a heptaketide backbone produced by acrA covalently fused to a L-serine by acrB. After the formation of the PK-NRP hybrid product, it is detached from acrB by reductive release to set up the formation of the lactam ring by aldol condensation. The hydrolyase acrC then catalyzes water loss to generate a double bond in the ring. This double bond is probably reduced, which is followed by three oxidations at C-22 to generate the carboxylic acid moiety, involving probably the FAD-binding monooxygenase acrE and the cytochrome P450 monooxygenases acrD and acrF. Finally, a last methylation step performed by the O-methyltransferase acrG leads to the production of acurin A. This is Cytochrome P450 monooxygenase acrF from Aspergillus aculeatus (strain ATCC 16872 / CBS 172.66 / WB 5094).